The primary structure comprises 256 residues: MPVEITVKELLEAGVHFGHERKRWNPKFARYIYAERNGIHIIDLQKTMEELERTFRFIEDLAMRGGTILFVGTKKQAQDIVRMEAERAGMPYVNQRWLGGMLTNFKTISQRVHRLEELEALFASPEIEERPKKEQVRLKHELERLQKYLSGFRLLKRLPDAIFVVDPTKEAIAVREARKLFIPVIALADTDSDPDLVDYIIPGNDDAIRSIQLILSRAVDLIIQARGGVVEPSPSYALVQEAEATETPEGESEVEA.

Positions 104-149 form a coiled coil; sequence NFKTISQRVHRLEELEALFASPEIEERPKKEQVRLKHELERLQKYL.

The protein belongs to the universal ribosomal protein uS2 family. In terms of assembly, part of the 30S ribosomal subunit. Contacts protein S8.

Its function is as follows. Spans the head-body hinge region of the 30S subunit. Is loosely associated with the 30S subunit. This Thermus thermophilus (strain ATCC BAA-163 / DSM 7039 / HB27) protein is Small ribosomal subunit protein uS2 (rpsB).